The primary structure comprises 194 residues: ATP-dependent Clp protease proteolytic subunit (194 aa).

The active-site Nucleophile is the Ser98. His123 is an active-site residue.

It belongs to the peptidase S14 family. Fourteen ClpP subunits assemble into 2 heptameric rings which stack back to back to give a disk-like structure with a central cavity, resembling the structure of eukaryotic proteasomes.

The protein localises to the cytoplasm. The enzyme catalyses Hydrolysis of proteins to small peptides in the presence of ATP and magnesium. alpha-casein is the usual test substrate. In the absence of ATP, only oligopeptides shorter than five residues are hydrolyzed (such as succinyl-Leu-Tyr-|-NHMec, and Leu-Tyr-Leu-|-Tyr-Trp, in which cleavage of the -Tyr-|-Leu- and -Tyr-|-Trp bonds also occurs).. Its function is as follows. Cleaves peptides in various proteins in a process that requires ATP hydrolysis. Has a chymotrypsin-like activity. Plays a major role in the degradation of misfolded proteins. The polypeptide is ATP-dependent Clp protease proteolytic subunit (Alkaliphilus metalliredigens (strain QYMF)).